The sequence spans 87 residues: MSEQTGKVDDSQSPPKVQKKLRKGDLVKVDREKYSNSLESKASDTNLPEYIFQGPGEVLLIKGDYCQVRWRRPVPDVWINSDHIVSY.

The span at 1-10 shows a compositional bias: basic and acidic residues; it reads MSEQTGKVDD. Residues 1–23 are disordered; it reads MSEQTGKVDDSQSPPKVQKKLRK.

It belongs to the complex I NdhO subunit family. NDH-1 can be composed of about 15 different subunits; different subcomplexes with different compositions have been identified which probably have different functions.

It is found in the cellular thylakoid membrane. The enzyme catalyses a plastoquinone + NADH + (n+1) H(+)(in) = a plastoquinol + NAD(+) + n H(+)(out). It catalyses the reaction a plastoquinone + NADPH + (n+1) H(+)(in) = a plastoquinol + NADP(+) + n H(+)(out). NDH-1 shuttles electrons from an unknown electron donor, via FMN and iron-sulfur (Fe-S) centers, to quinones in the respiratory and/or the photosynthetic chain. The immediate electron acceptor for the enzyme in this species is believed to be plastoquinone. Couples the redox reaction to proton translocation, and thus conserves the redox energy in a proton gradient. Cyanobacterial NDH-1 also plays a role in inorganic carbon-concentration. The polypeptide is NAD(P)H-quinone oxidoreductase subunit O (Prochlorococcus marinus (strain NATL2A)).